Consider the following 333-residue polypeptide: Beta-ketoacyl-[acyl-carrier-protein] synthase III (333 aa).

Residues Cys114 and His255 contribute to the active site. The tract at residues 256–260 (QANYR) is ACP-binding. Asn285 is a catalytic residue.

Belongs to the thiolase-like superfamily. FabH family. As to quaternary structure, homodimer.

Its subcellular location is the cytoplasm. The enzyme catalyses malonyl-[ACP] + acetyl-CoA + H(+) = 3-oxobutanoyl-[ACP] + CO2 + CoA. Its pathway is lipid metabolism; fatty acid biosynthesis. In terms of biological role, catalyzes the condensation reaction of fatty acid synthesis by the addition to an acyl acceptor of two carbons from malonyl-ACP. Catalyzes the first condensation reaction which initiates fatty acid synthesis and may therefore play a role in governing the total rate of fatty acid production. Possesses both acetoacetyl-ACP synthase and acetyl transacylase activities. Its substrate specificity determines the biosynthesis of branched-chain and/or straight-chain of fatty acids. The protein is Beta-ketoacyl-[acyl-carrier-protein] synthase III of Aliarcobacter butzleri (strain RM4018) (Arcobacter butzleri).